A 333-amino-acid chain; its full sequence is Ornithine carbamoyltransferase (333 aa).

Residues 56–59, Gln83, Arg107, and 134–137 contribute to the carbamoyl phosphate site; these read STRT and HPTQ. L-ornithine is bound by residues Asn167, Asp231, and 235-236; that span reads SM. Residues 273–274 and Arg318 each bind carbamoyl phosphate; that span reads CL.

This sequence belongs to the aspartate/ornithine carbamoyltransferase superfamily. OTCase family.

It is found in the cytoplasm. The enzyme catalyses carbamoyl phosphate + L-ornithine = L-citrulline + phosphate + H(+). The protein operates within amino-acid biosynthesis; L-arginine biosynthesis; L-arginine from L-ornithine and carbamoyl phosphate: step 1/3. Reversibly catalyzes the transfer of the carbamoyl group from carbamoyl phosphate (CP) to the N(epsilon) atom of ornithine (ORN) to produce L-citrulline. The chain is Ornithine carbamoyltransferase (argF) from Staphylococcus aureus (strain COL).